The primary structure comprises 129 residues: Small ribosomal subunit protein uS9 (129 aa).

The protein belongs to the universal ribosomal protein uS9 family.

This is Small ribosomal subunit protein uS9 from Chlorobium limicola (strain DSM 245 / NBRC 103803 / 6330).